A 425-amino-acid polypeptide reads, in one-letter code: Orexin/Hypocretin receptor type 1 (425 aa).

Over 1–46 (MEPSATPGPQMGVPTGVGDPSLVPPDYEEEFLSYLWRDYLYPKQYE) the chain is Extracellular. Residues 26-41 (DYEEEFLSYLWRDYLY) are required for response to orexin-A. A helical transmembrane segment spans residues 47–67 (WVLIAAYVAVFLVALVGNTLV). The Cytoplasmic portion of the chain corresponds to 68-82 (CLAVWRNHHMRTVTN). Residues 83 to 105 (YFIVNLSLADVLVTAICLPASLL) form a helical membrane-spanning segment. Over 106–119 (VDITESWLFGHALC) the chain is Extracellular. The cysteines at positions 119 and 202 are disulfide-linked. Residues 120–140 (KVIPYLQAVSVSVAVLTLSFI) traverse the membrane as a helical segment. At 141–160 (ALDRWYAIYHPLLFKSTARR) the chain is on the cytoplasmic side. The helical transmembrane segment at 161-182 (ARGSILGIWAVSPAVMVPQAAV) threads the bilayer. Residues 183–213 (MECSSVLPELANRTRLFSVCDERWADDLYPK) lie on the Extracellular side of the membrane. Residues 214-235 (IYHSCFFIVTYLAPLGLMAMAY) traverse the membrane as a helical segment. Over 236–298 (FQIFRKLWGR…QMRARRKTAK (63 aa)) the chain is Cytoplasmic. A helical membrane pass occupies residues 299–321 (MLMVVLLVFALCYLPISVLNVLK). Over 322-336 (RVFGMFRQTSDREAV) the chain is Extracellular. Residues 337–360 (YACFTFSHWLVYANSAANPIIYNF) form a helical membrane-spanning segment. Topologically, residues 361-425 (LSGKFREQFK…VLTSVTTVLP (65 aa)) are cytoplasmic.

It belongs to the G-protein coupled receptor 1 family.

Its subcellular location is the cell membrane. Moderately selective excitatory receptor for orexin-A and, with a lower affinity, for orexin-B neuropeptide. Triggers an increase in cytoplasmic Ca(2+) levels in response to orexin-A binding. This Sus scrofa (Pig) protein is Orexin/Hypocretin receptor type 1.